The primary structure comprises 470 residues: Cytochrome P450 monooxygenase sirC (470 aa).

The chain crosses the membrane as a helical span at residues 12–34; it reads LRGMVVGTIMLLCYRYGLALSIL. The N-linked (GlcNAc...) asparagine glycan is linked to asparagine 399. Cysteine 410 lines the heme pocket.

It belongs to the cytochrome P450 family. It depends on heme as a cofactor.

The protein localises to the membrane. Its pathway is mycotoxin biosynthesis. In terms of biological role, cytochrome P450 monooxygenase; part of the gene cluster that mediates the biosynthesis of sirodesmin PL, an epipolythiodioxopiperazine (ETP) characterized by a disulfide bridged cyclic dipeptide and that acts as a phytotoxin which is involved in the blackleg didease of canola. SirD catalyzes the O-prenylation of L-tyrosine (L-Tyr) in the presence of dimethylallyl diphosphate (DMAPP) to yield 4-O-dimethylallyl-L-Tyr, and therefore represents probably the first pathway-specific enzyme in the biosynthesis of sirodesmin PL. 4-O-dimethylallyl-L-Tyr, then undergoes condensation with L-Ser in a reaction catalyzed by the non-ribosomal peptide synthase sirP to form the diketopiperazine (DKP) backbone. Further bishydroxylation of the DKP performed by the cytochrome P450 monooxygenase sirC leads to the production of the intermediate phomamide. This step is essential to form the reactive thiol group required for toxicity of sirodesmin PL. The next steps of sirodesmin biosynthesis are not well understood yet, but some predictions could be made from intermediate compounds identification. Phomamide is converted into phomalizarine via oxidation, probably by sirT. Further oxidation, methylation (by sirM or sirN) and reduction steps convert phomalizarine to deacetyl sirodesmin. Finally, acetyltransferase sirH probably acetylates deacetyl sirodesmin to produce sirodesmin PL. In Leptosphaeria maculans (Blackleg fungus), this protein is Cytochrome P450 monooxygenase sirC.